A 43-amino-acid chain; its full sequence is Protein PsbN (43 aa).

Residues 7 to 27 (LIIFIASLLLGLTGYSIYTAF) form a helical membrane-spanning segment.

It belongs to the PsbN family.

The protein resides in the plastid. It localises to the chloroplast thylakoid membrane. Its function is as follows. May play a role in photosystem I and II biogenesis. This chain is Protein PsbN, found in Guillardia theta (Cryptophyte).